The following is a 431-amino-acid chain: Histidine--tRNA ligase (431 aa).

Belongs to the class-II aminoacyl-tRNA synthetase family.

The protein resides in the cytoplasm. It catalyses the reaction tRNA(His) + L-histidine + ATP = L-histidyl-tRNA(His) + AMP + diphosphate + H(+). The protein is Histidine--tRNA ligase (hisS) of Pyrococcus abyssi (strain GE5 / Orsay).